Consider the following 632-residue polypeptide: Extracellular metalloproteinase 1 (632 aa).

An N-terminal signal peptide occupies residues 1-19 (MHGLLLAAGLLSLPLRVLA). A propeptide spanning residues 20-243 (HPQPSTSLTS…VHNVVDYVSH (224 aa)) is cleaved from the precursor. N284 is a glycosylation site (N-linked (GlcNAc...) asparagine). Zn(2+) is bound at residue H427. The active site involves E428. Residue H431 coordinates Zn(2+). N591 and N620 each carry an N-linked (GlcNAc...) asparagine glycan.

Belongs to the peptidase M36 family. The cofactor is Zn(2+).

It is found in the secreted. Its function is as follows. Secreted metalloproteinase that allows assimilation of proteinaceous substrates and probably acts as a virulence factor. The polypeptide is Extracellular metalloproteinase 1 (MEP1) (Arthroderma gypseum (strain ATCC MYA-4604 / CBS 118893) (Microsporum gypseum)).